Reading from the N-terminus, the 477-residue chain is Bifunctional protein HldE (477 aa).

Residues 1–319 (MTPPLPGFRD…AALGGGPAPA (319 aa)) are ribokinase. 195 to 198 (NLAE) contributes to the ATP binding site. Residue aspartate 264 is part of the active site. Residues 346 to 477 (MTNGCFDLLH…DLIARIRSRG (132 aa)) are cytidylyltransferase.

The protein in the N-terminal section; belongs to the carbohydrate kinase PfkB family. In the C-terminal section; belongs to the cytidylyltransferase family. In terms of assembly, homodimer.

The catalysed reaction is D-glycero-beta-D-manno-heptose 7-phosphate + ATP = D-glycero-beta-D-manno-heptose 1,7-bisphosphate + ADP + H(+). The enzyme catalyses D-glycero-beta-D-manno-heptose 1-phosphate + ATP + H(+) = ADP-D-glycero-beta-D-manno-heptose + diphosphate. Its pathway is nucleotide-sugar biosynthesis; ADP-L-glycero-beta-D-manno-heptose biosynthesis; ADP-L-glycero-beta-D-manno-heptose from D-glycero-beta-D-manno-heptose 7-phosphate: step 1/4. It participates in nucleotide-sugar biosynthesis; ADP-L-glycero-beta-D-manno-heptose biosynthesis; ADP-L-glycero-beta-D-manno-heptose from D-glycero-beta-D-manno-heptose 7-phosphate: step 3/4. Its function is as follows. Catalyzes the phosphorylation of D-glycero-D-manno-heptose 7-phosphate at the C-1 position to selectively form D-glycero-beta-D-manno-heptose-1,7-bisphosphate. In terms of biological role, catalyzes the ADP transfer from ATP to D-glycero-beta-D-manno-heptose 1-phosphate, yielding ADP-D-glycero-beta-D-manno-heptose. The protein is Bifunctional protein HldE of Halorhodospira halophila (strain DSM 244 / SL1) (Ectothiorhodospira halophila (strain DSM 244 / SL1)).